Consider the following 400-residue polypeptide: Elongation factor Tu (400 aa).

Residues 10–209 enclose the tr-type G domain; that stretch reads KPHVNIGTIG…EVDKYIPTPE (200 aa). The tract at residues 19-26 is G1; that stretch reads GHVDHGKT. 19-26 serves as a coordination point for GTP; that stretch reads GHVDHGKT. Threonine 26 lines the Mg(2+) pocket. Residues 60 to 64 are G2; that stretch reads GITIN. The tract at residues 81–84 is G3; that stretch reads DCPG. GTP-binding positions include 81-85 and 136-139; these read DCPGH and NKAD. The G4 stretch occupies residues 136–139; sequence NKAD. Residues 174-176 form a G5 region; the sequence is SGL.

The protein belongs to the TRAFAC class translation factor GTPase superfamily. Classic translation factor GTPase family. EF-Tu/EF-1A subfamily. Monomer.

It is found in the cytoplasm. It catalyses the reaction GTP + H2O = GDP + phosphate + H(+). GTP hydrolase that promotes the GTP-dependent binding of aminoacyl-tRNA to the A-site of ribosomes during protein biosynthesis. This is Elongation factor Tu from Heliobacterium modesticaldum (strain ATCC 51547 / Ice1).